We begin with the raw amino-acid sequence, 706 residues long: Cyclic nucleotide-gated ion channel 18 (706 aa).

Residues 1-53 (MNKIRSLRCLLPETITSASTAASNRGSDGSQFSVLWRHQILDPDSNIVTYWNH) are Cytoplasmic-facing. Residues 54–74 (VFLITSILALFLDPFYFYVPY) traverse the membrane as a helical segment. The Extracellular portion of the chain corresponds to 75–86 (VGGPACLSIDIS). The chain crosses the membrane as a helical span at residues 87–107 (LAATVTFFRTVADIFHLLHIF). The Cytoplasmic portion of the chain corresponds to 108–142 (MKFRTAFVARSSRVFGRGELVMDSREIAMRYLKTD). The helical transmembrane segment at 143 to 163 (FLIDVAAMLPLPQLVIWLVIP) threads the bilayer. Topologically, residues 164-174 (AATNGTANHAN) are extracellular. Residues 175–195 (STLALIVLVQYIPRSFIIFPL) form a helical membrane-spanning segment. Topologically, residues 196–217 (NQRIIKTTGFIAKTAWAGAAYN) are cytoplasmic. A helical membrane pass occupies residues 218–238 (LLLYILASHVLGAMWYLSSIG). Over 239–345 (RQFSCWSNVC…ITTSVYLGET (107 aa)) the chain is Extracellular. Residues 346-366 (LFCITICIFGLILFTLLIGNM) traverse the membrane as a helical segment. Over 367–706 (QSSLQSMSVR…PDFSIDKEDV (340 aa)) the chain is Cytoplasmic. A nucleoside 3',5'-cyclic phosphate is bound by residues 449–579 (FFSQ…AFRY) and Glu520. Residues 565–580 (FKRLQSKKLQHAFRYY) are calmodulin-binding. Residues 585–614 (RAWGACFVQSAWRRYKRRKLAKELSLHESS) enclose the IQ domain. A disordered region spans residues 661-706 (ANTRRGTNQKASSSSTGKKDGSSTSLKMPQLFKPDEPDFSIDKEDV). The segment covering 693-706 (KPDEPDFSIDKEDV) has biased composition (basic and acidic residues).

Belongs to the cyclic nucleotide-gated cation channel (TC 1.A.1.5) family. Homomultimer. Interacts with CPK32. As to expression, expressed in pollen grains. Not detected in leaves, roots or root hairs.

It is found in the cell membrane. Its subcellular location is the cytoplasmic vesicle membrane. Its function is as follows. Cyclic nucleotide-gated ion channel required for directional pollen tube growth into the transmitting tract. Acts as a Ca(2+)-permeable divalent cation-selective channel inhibited by either lanthanum or gadolinium. Regulated by CPK32 to mediate Ca(2+) transport across the plasma membrane in response to Ca(2+) oscillation. The polypeptide is Cyclic nucleotide-gated ion channel 18 (Arabidopsis thaliana (Mouse-ear cress)).